Consider the following 270-residue polypeptide: tRNA (guanine-N(1)-)-methyltransferase (270 aa).

Residues glycine 113 and 133 to 138 (IGDYVL) contribute to the S-adenosyl-L-methionine site. Positions 251–270 (APTEGTGLIHHRDVEGPGEG) are disordered. Basic and acidic residues predominate over residues 260-270 (HHRDVEGPGEG).

This sequence belongs to the RNA methyltransferase TrmD family. Homodimer.

The protein resides in the cytoplasm. It catalyses the reaction guanosine(37) in tRNA + S-adenosyl-L-methionine = N(1)-methylguanosine(37) in tRNA + S-adenosyl-L-homocysteine + H(+). Specifically methylates guanosine-37 in various tRNAs. The chain is tRNA (guanine-N(1)-)-methyltransferase from Frankia casuarinae (strain DSM 45818 / CECT 9043 / HFP020203 / CcI3).